The primary structure comprises 768 residues: Probable beta-glucosidase M (768 aa).

Residues 1-19 form the signal peptide; that stretch reads MHAIAGLTGFLAGVSLSYA. Asn25, Asn72, and Asn259 each carry an N-linked (GlcNAc...) asparagine glycan. Residue Asp287 is part of the active site. N-linked (GlcNAc...) asparagine glycans are attached at residues Asn315, Asn322, Asn394, Asn434, Asn472, Asn543, and Asn651.

Belongs to the glycosyl hydrolase 3 family.

It is found in the secreted. The catalysed reaction is Hydrolysis of terminal, non-reducing beta-D-glucosyl residues with release of beta-D-glucose.. Its pathway is glycan metabolism; cellulose degradation. Functionally, beta-glucosidases are one of a number of cellulolytic enzymes involved in the degradation of cellulosic biomass. Catalyzes the last step releasing glucose from the inhibitory cellobiose. The chain is Probable beta-glucosidase M (bglM) from Aspergillus flavus (strain ATCC 200026 / FGSC A1120 / IAM 13836 / NRRL 3357 / JCM 12722 / SRRC 167).